The chain runs to 450 residues: MNRSILKFVKNGIISSSSRINNNGFINKNNNNRWFATLPQPNRGIAGEKQPIYLDMQSTTPIDPRVLDAMLPLYTENYGNPHSKTHAYGWTSNDLVEDAREKVSKIIGADSKEIIFTSGATESGNIAIKGVARFYKEKKNHIITTVTEHKCILDSCRHLEMEGFKVTYLPVGENGLVDLELLKNTITPQTSLVTIMAVNNEIGVVQPIKEIGKICRENGVFFHTDAAQAVGKIPIDVNDMNIDLLSISGHKIYGPKGVGALFVRRRPRVRIEPITTGGGQERGIRSGTVPSTLAVGLGAACDIALKEMNHDAAWVKYLYDRLLKGITDNIPNVKVNGDLNARYYGNLNISFSYVEGESLLMAIKDVACSSGSACTSSSLEPSYVLRSLGVEEDMAHSSIRFGIGRFTTEQEIDYTIEILKKNVQRLRDMSPLWEMVQEGIDIKTIEWSQI.

Residues 1-52 constitute a mitochondrion transit peptide; it reads MNRSILKFVKNGIISSSSRINNNGFINKNNNNRWFATLPQPNRGIAGEKQPI. Pyridoxal 5'-phosphate is bound by residues 120–121, Asn-200, Gln-228, and 248–250; these read AT and SGH. Lys-251 carries the post-translational modification N6-(pyridoxal phosphate)lysine. Residue Thr-288 participates in pyridoxal 5'-phosphate binding. Cys-374 functions as the Cysteine persulfide intermediate in the catalytic mechanism. Cys-374 is a [2Fe-2S] cluster binding site.

This sequence belongs to the class-V pyridoxal-phosphate-dependent aminotransferase family. NifS/IscS subfamily. Requires pyridoxal 5'-phosphate as cofactor.

The protein resides in the mitochondrion. It localises to the nucleus. The enzyme catalyses (sulfur carrier)-H + L-cysteine = (sulfur carrier)-SH + L-alanine. In terms of biological role, catalyzes the removal of elemental sulfur from cysteine to produce alanine. It supplies the inorganic sulfur for iron-sulfur (Fe-S) clusters. This chain is Probable cysteine desulfurase, mitochondrial (nfs1), found in Dictyostelium discoideum (Social amoeba).